We begin with the raw amino-acid sequence, 276 residues long: Diaminopimelate epimerase (276 aa).

Substrate-binding residues include Asn-13, Gln-46, and Asn-66. Cys-75 functions as the Proton donor in the catalytic mechanism. Substrate contacts are provided by residues 76 to 77 (GN), Asn-159, Asn-192, and 210 to 211 (ER). Cys-219 functions as the Proton acceptor in the catalytic mechanism. 220–221 (GT) contacts substrate.

Belongs to the diaminopimelate epimerase family. Homodimer.

It localises to the cytoplasm. It carries out the reaction (2S,6S)-2,6-diaminopimelate = meso-2,6-diaminopimelate. It participates in amino-acid biosynthesis; L-lysine biosynthesis via DAP pathway; DL-2,6-diaminopimelate from LL-2,6-diaminopimelate: step 1/1. Functionally, catalyzes the stereoinversion of LL-2,6-diaminopimelate (L,L-DAP) to meso-diaminopimelate (meso-DAP), a precursor of L-lysine and an essential component of the bacterial peptidoglycan. This Pseudomonas putida (strain GB-1) protein is Diaminopimelate epimerase.